We begin with the raw amino-acid sequence, 857 residues long: MDSRNQLIVAILLTSACLIYCAQYVTVFYGIPAWKNASIPLFCATRNRDTWGTIQCLPDNDDYQEIPLNVTEAFDAWNNTVTEQAVEDVWNLFETSVKPCVKLTPLCVQMECNSTSTESSNSTSEGSTVPEILNETTSCITNNSCSDLGSEEVVDCRFNMTGLQLDKPQQYSETWYSKDVVCDTTNGTSRKCYMNHCNTSVITESCDKHYWDAMRFRYCAPPGLCLLRCNDTNYSGFEPKCPKVVAATCTRMMETQTSTWFGFNGTRAENRTYIYWHGRDNRTIISLNTHYNLTMHCKRPGNKSVLPITLRSGRVFHSRPIINERPKQAWCWFGGDWKKAMQEVKQTLVKHPRYRGTNDTQKINFTQPGKGSDAEVVYMWTNCRGEFLYCNMTRFLNWIENRAHPQRNYAPCHIRQIINTWHRVGQNIYLPPREGELVCNSTVTSIIANIDMFDNQTSITFSAEVAELYRLELGDYKLVEITPIGFAPTSEKRYSSAPQRNKRGVFVLGVLGFLATAGSAMGAASLTLSAHPGLYWAGIVQQQQQLLDVVKRQQEMLRLTVWGTKNLQTRVTAIEKYLRDQARLNSWGCAFRQVCYTTVLWENNSIVPDWNNMTWQEWEQQTRDLEANISRSLEQAQIQQEKNMYELQKLNSWDVFGNWFDLTSWIKYIQYGVYVIIGIIALRIVIYVVQLLSRLRKGYRPVFSSPPGYIQQIHIHKDWEQPDREETDEDAGNSIGDSSWPWPIAYIHFLIRQLIRLLTGLYSVCKDLLSRSFPTLQLIFQSLQRALTTIRDWLRLTIAYLQYGCEWIQEVLQVLARTTRETLASAWRDLWGAMGRIGRGILAVPRRIRQGAELALL.

The signal sequence occupies residues 1 to 22 (MDSRNQLIVAILLTSACLIYCA). The Extracellular portion of the chain corresponds to 23–671 (QYVTVFYGIP…LTSWIKYIQY (649 aa)). Residue N36 is glycosylated (N-linked (GlcNAc...) asparagine; by host). C43 and C56 are joined by a disulfide. N-linked (GlcNAc...) asparagine; by host glycans are attached at residues N69, N78, N113, N121, N134, N142, N159, N186, N198, N230, N233, N264, N270, N281, N292, N302, N358, N364, N391, N440, and N455. 5 disulfides stabilise this stretch: C100/C206, C107/C197, C112/C156, C219/C249, and C229/C241. Positions 112 to 155 (CNSTSTESSNSTSEGSTVPEILNETTSCITNNSCSDLGSEEVVD) are V1. The V2 stretch occupies residues 156–197 (CRFNMTGLQLDKPQQYSETWYSKDVVCDTTNGTSRKCYMNHC). The V3 stretch occupies residues 297-330 (CKRPGNKSVLPITLRSGRVFHSRPIINERPKQAW). C297 and C331 are joined by a disulfide. Intrachain disulfides connect C383/C439 and C390/C412. The segment at 390 to 412 (CNMTRFLNWIENRAHPQRNYAPC) is V4. The segment at 454-461 (DNQTSITF) is V5. Residues 504 to 524 (GVFVLGVLGFLATAGSAMGAA) are fusion peptide. The immunosuppression stretch occupies residues 567–583 (LQTRVTAIEKYLRDQAR). N-linked (GlcNAc...) asparagine; by host glycosylation is found at N603, N612, and N628. A coiled-coil region spans residues 616–644 (QEWEQQTRDLEANISRSLEQAQIQQEKNM). An MPER; binding to GalCer region spans residues 649–670 (KLNSWDVFGNWFDLTSWIKYIQ). The helical transmembrane segment at 672 to 692 (GVYVIIGIIALRIVIYVVQLL) threads the bilayer. The Cytoplasmic segment spans residues 693–857 (SRLRKGYRPV…IRQGAELALL (165 aa)). The YXXV motif; contains endocytosis signal motif lies at 699–702 (YRPV). The S-palmitoyl cysteine; by host moiety is linked to residue C765. The Di-leucine internalization motif signature appears at 856–857 (LL).

The mature envelope protein (Env) consists of a homotrimer of non-covalently associated gp120-gp41 heterodimers. The resulting complex protrudes from the virus surface as a spike. There seems to be as few as 10 spikes on the average virion. Interacts with human CD4, CCR5 and CXCR4, to form a P4HB/PDI-CD4-CXCR4-gp120 complex. Gp120 also interacts with the C-type lectins CD209/DC-SIGN and CLEC4M/DC-SIGNR (collectively referred to as DC-SIGN(R)). Gp120 and gp41 interact with GalCer. As to quaternary structure, the mature envelope protein (Env) consists of a homotrimer of non-covalently associated gp120-gp41 heterodimers. The resulting complex protrudes from the virus surface as a spike. There seems to be as few as 10 spikes on the average virion. In terms of processing, specific enzymatic cleavages in vivo yield mature proteins. Envelope glycoproteins are synthesized as an inactive precursor that is heavily N-glycosylated and processed likely by host cell furin in the Golgi to yield the mature SU and TM proteins. The cleavage site between SU and TM requires the minimal sequence [KR]-X-[KR]-R. Palmitoylation of the transmembrane protein and of Env polyprotein (prior to its proteolytic cleavage) is essential for their association with host cell membrane lipid rafts. Palmitoylation is therefore required for envelope trafficking to classical lipid rafts, but not for viral replication.

It localises to the virion membrane. Its subcellular location is the host cell membrane. It is found in the host endosome membrane. Its function is as follows. The surface protein gp120 (SU) attaches the virus to the host lymphoid cell by binding to the primary receptor CD4. This interaction induces a structural rearrangement creating a high affinity binding site for a chemokine coreceptor like CXCR4 and/or CCR5. This peculiar 2 stage receptor-interaction strategy allows gp120 to maintain the highly conserved coreceptor-binding site in a cryptic conformation, protected from neutralizing antibodies. Since CD4 also displays a binding site for the disulfide-isomerase P4HB/PDI, a P4HB/PDI-CD4-CXCR4-gp120 complex may form. In that complex, P4HB/PDI could reach and reduce gp120 disulfide bonds, causing major conformational changes in gp120. TXN, another PDI family member could also be involved in disulfide rearrangements in Env during fusion. These changes are transmitted to the transmembrane protein gp41 and are thought to activate its fusogenic potential by unmasking its fusion peptide. Functionally, the surface protein gp120 is a ligand for CD209/DC-SIGN and CLEC4M/DC-SIGNR, which are respectively found on dendritic cells (DCs), and on endothelial cells of liver sinusoids and lymph node sinuses. These interactions allow capture of viral particles at mucosal surfaces by these cells and subsequent transmission to permissive cells. DCs are professional antigen presenting cells, critical for host immunity by inducing specific immune responses against a broad variety of pathogens. They act as sentinels in various tissues where they take up antigen, process it, and present it to T-cells following migration to lymphoid organs. HIV subverts the migration properties of dendritic cells to gain access to CD4+ T-cells in lymph nodes. Virus transmission to permissive T-cells occurs either in trans (without DCs infection, through viral capture and transmission), or in cis (following DCs productive infection, through the usual CD4-gp120 interaction), thereby inducing a robust infection. In trans infection, bound virions remain infectious over days and it is proposed that they are not degraded, but protected in non-lysosomal acidic organelles within the DCs close to the cell membrane thus contributing to the viral infectious potential during DCs' migration from the periphery to the lymphoid tissues. On arrival at lymphoid tissues, intact virions recycle back to DCs' cell surface allowing virus transmission to CD4+ T-cells. Virion capture also seems to lead to MHC-II-restricted viral antigen presentation, and probably to the activation of HIV-specific CD4+ cells. The transmembrane protein gp41 (TM) acts as a class I viral fusion protein. Under the current model, the protein has at least 3 conformational states: pre-fusion native state, pre-hairpin intermediate state, and post-fusion hairpin state. During fusion of viral and target intracellular membranes, the coiled coil regions (heptad repeats) assume a trimer-of-hairpins structure, positioning the fusion peptide in close proximity to the C-terminal region of the ectodomain. The formation of this structure appears to drive apposition and subsequent fusion of viral and target cell membranes. Complete fusion occurs in host cell endosomes and is dynamin-dependent, however some lipid transfer might occur at the plasma membrane. The virus undergoes clathrin-dependent internalization long before endosomal fusion, thus minimizing the surface exposure of conserved viral epitopes during fusion and reducing the efficacy of inhibitors targeting these epitopes. Membranes fusion leads to delivery of the nucleocapsid into the cytoplasm. In terms of biological role, the envelope glycoprotein gp160 precursor down-modulates cell surface CD4 antigen by interacting with it in the endoplasmic reticulum and blocking its transport to the cell surface. Its function is as follows. The gp120-gp41 heterodimer seems to contribute to T-cell depletion during HIV-1 infection. The envelope glycoproteins expressed on the surface of infected cells induce apoptosis through an interaction with uninfected cells expressing the receptor (CD4) and the coreceptors CXCR4 or CCR5. This type of bystander killing may be obtained by at least three distinct mechanisms. First, the interaction between the 2 cells can induce cellular fusion followed by nuclear fusion within the syncytium. Syncytia are condemned to die from apoptosis. Second, the 2 interacting cells may not fuse entirely and simply exchange plasma membrane lipids, after a sort of hemifusion process, followed by rapid death. Third, it is possible that virus-infected cells, on the point of undergoing apoptosis, fuse with CD4-expressing cells, in which case apoptosis is rapidly transmitted from one cell to the other and thus occurs in a sort of contagious fashion. Functionally, the gp120-gp41 heterodimer allows rapid transcytosis of the virus through CD4 negative cells such as simple epithelial monolayers of the intestinal, rectal and endocervical epithelial barriers. Both gp120 and gp41 specifically recognize glycosphingolipids galactosyl-ceramide (GalCer) or 3' sulfo-galactosyl-ceramide (GalS) present in the lipid rafts structures of epithelial cells. Binding to these alternative receptors allows the rapid transcytosis of the virus through the epithelial cells. This transcytotic vesicle-mediated transport of virions from the apical side to the basolateral side of the epithelial cells does not involve infection of the cells themselves. The sequence is that of Envelope glycoprotein gp160 (env) from Human immunodeficiency virus type 2 subtype A (isolate KR) (HIV-2).